The following is a 20-amino-acid chain: Protein PR-L6 (20 aa).

The protein belongs to the BetVI family.

In Lupinus luteus (European yellow lupine), this protein is Protein PR-L6.